The primary structure comprises 81 residues: Large ribosomal subunit protein bL31B (81 aa).

This sequence belongs to the bacterial ribosomal protein bL31 family. Type B subfamily. In terms of assembly, part of the 50S ribosomal subunit.

The sequence is that of Large ribosomal subunit protein bL31B from Oceanobacillus iheyensis (strain DSM 14371 / CIP 107618 / JCM 11309 / KCTC 3954 / HTE831).